The chain runs to 345 residues: N-acetyl-gamma-glutamyl-phosphate reductase (345 aa).

Cys-149 is an active-site residue.

This sequence belongs to the NAGSA dehydrogenase family. Type 1 subfamily.

It localises to the cytoplasm. It catalyses the reaction N-acetyl-L-glutamate 5-semialdehyde + phosphate + NADP(+) = N-acetyl-L-glutamyl 5-phosphate + NADPH + H(+). Its pathway is amino-acid biosynthesis; L-arginine biosynthesis; N(2)-acetyl-L-ornithine from L-glutamate: step 3/4. In terms of biological role, catalyzes the NADPH-dependent reduction of N-acetyl-5-glutamyl phosphate to yield N-acetyl-L-glutamate 5-semialdehyde. The protein is N-acetyl-gamma-glutamyl-phosphate reductase of Bacillus cytotoxicus (strain DSM 22905 / CIP 110041 / 391-98 / NVH 391-98).